Reading from the N-terminus, the 120-residue chain is Large ribosomal subunit protein bL19 (120 aa).

Belongs to the bacterial ribosomal protein bL19 family.

Functionally, this protein is located at the 30S-50S ribosomal subunit interface and may play a role in the structure and function of the aminoacyl-tRNA binding site. This chain is Large ribosomal subunit protein bL19, found in Thermosynechococcus vestitus (strain NIES-2133 / IAM M-273 / BP-1).